A 349-amino-acid polypeptide reads, in one-letter code: Alanine racemase (349 aa).

The active-site Proton acceptor; specific for D-alanine is lysine 35. The residue at position 35 (lysine 35) is an N6-(pyridoxal phosphate)lysine. Arginine 130 provides a ligand contact to substrate. Tyrosine 244 acts as the Proton acceptor; specific for L-alanine in catalysis. Methionine 292 is a substrate binding site.

It belongs to the alanine racemase family. The cofactor is pyridoxal 5'-phosphate.

It catalyses the reaction L-alanine = D-alanine. It functions in the pathway amino-acid biosynthesis; D-alanine biosynthesis; D-alanine from L-alanine: step 1/1. Catalyzes the interconversion of L-alanine and D-alanine. May also act on other amino acids. The protein is Alanine racemase (alr) of Cereibacter sphaeroides (strain ATCC 17023 / DSM 158 / JCM 6121 / CCUG 31486 / LMG 2827 / NBRC 12203 / NCIMB 8253 / ATH 2.4.1.) (Rhodobacter sphaeroides).